Reading from the N-terminus, the 264-residue chain is MDSRPIGVFDSGVGGLTVLKRLVEVLPGEDYIYFGDTKRVPYGDRSEEEIKKFAKQILNFMREQKVKAVVIACNTTCAVINKSEYDVVLFDVLKAGAESAALYTINKKIGVIATTRTVESKSYEKNIKIIDKNIEVYQKACPEFVPLIEKGLYNSPIAYETASKCLKELKEKDIDTLVLGCTHYPLMASVIEEIMGENVKIVDPAIKLAYDVKDYLLKKDLLNPQIRGKAEFFVSGDKDNFIKTAEMLLGEKIENVLHVDIEKY.

Residues 10–11 (DS) and 42–43 (YG) contribute to the substrate site. Cys73 acts as the Proton donor/acceptor in catalysis. Substrate is bound at residue 74–75 (NT). The Proton donor/acceptor role is filled by Cys181. Position 182–183 (182–183 (TH)) interacts with substrate.

It belongs to the aspartate/glutamate racemases family.

The catalysed reaction is L-glutamate = D-glutamate. It functions in the pathway cell wall biogenesis; peptidoglycan biosynthesis. Provides the (R)-glutamate required for cell wall biosynthesis. In Thermoanaerobacter pseudethanolicus (strain ATCC 33223 / 39E) (Clostridium thermohydrosulfuricum), this protein is Glutamate racemase.